We begin with the raw amino-acid sequence, 344 residues long: tRNA(Ile)-lysidine synthase (344 aa).

An ATP-binding site is contributed by S35–S40.

The protein belongs to the tRNA(Ile)-lysidine synthase family.

The protein localises to the cytoplasm. The catalysed reaction is cytidine(34) in tRNA(Ile2) + L-lysine + ATP = lysidine(34) in tRNA(Ile2) + AMP + diphosphate + H(+). Its function is as follows. Ligates lysine onto the cytidine present at position 34 of the AUA codon-specific tRNA(Ile) that contains the anticodon CAU, in an ATP-dependent manner. Cytidine is converted to lysidine, thus changing the amino acid specificity of the tRNA from methionine to isoleucine. The polypeptide is tRNA(Ile)-lysidine synthase (Methylobacterium sp. (strain 4-46)).